The chain runs to 265 residues: Tryptophan synthase alpha chain (265 aa).

Residues E47 and D58 each act as proton acceptor in the active site.

Belongs to the TrpA family. As to quaternary structure, tetramer of two alpha and two beta chains.

The enzyme catalyses (1S,2R)-1-C-(indol-3-yl)glycerol 3-phosphate + L-serine = D-glyceraldehyde 3-phosphate + L-tryptophan + H2O. Its pathway is amino-acid biosynthesis; L-tryptophan biosynthesis; L-tryptophan from chorismate: step 5/5. Its function is as follows. The alpha subunit is responsible for the aldol cleavage of indoleglycerol phosphate to indole and glyceraldehyde 3-phosphate. In Methanoregula boonei (strain DSM 21154 / JCM 14090 / 6A8), this protein is Tryptophan synthase alpha chain.